The following is a 153-amino-acid chain: Regulatory protein RecX (153 aa).

This sequence belongs to the RecX family.

Its subcellular location is the cytoplasm. Functionally, modulates RecA activity. The chain is Regulatory protein RecX from Neisseria meningitidis serogroup C / serotype 2a (strain ATCC 700532 / DSM 15464 / FAM18).